Consider the following 1948-residue polypeptide: MGENEDEKQAQASQVFENFVQATTCKGTLQAFNILTCLLDLDPLDHRNFYTQLKSKVNTWKAKALWHKLDKRGSHKEYKRGKACSNTKCLIVGGGPCGLRTAIELAYLGAKVVVVEKRDTFSRNNVLHLWPFTIHDLRGLGAKKFYGKFCAGSIDHISIRQLQLILFKVALMLGVEIHVNVEFVRVREPPKDQENRKIGWRAEFLPADHALSNFEFDVIIGADGHRNTLEGFRRKEFRGKLAIAITANFINRNSTAEAKVEEISGVAFIFNQKFFQDLKEETGIDLENIVYYKDSTHYFVMTAKKQSLLDKGVILNDYIDTEMLLCAENVNQDNLLSYAREAADFATNYQLPSLDFAINHNGQPDVAMFDFTSMYASENAALMRERQAHQLLVALVGDSLLEPFWPMGTGCARGFLAAFDTAWMVKSWDQGTPPLEVLAERESLYRLLPQTTPENINKNFEQYTLDPATRYPNLNVHCVRPHQVKHLYITKEMDRFPLERWGSVRRSASLSRRESDIRPNKLLTWCQQQTKGYQHVRVTDLTTSWRSGLALCAIIHSFRPELINFDSLNENDVVENNQLAFDVAKREFGILPVTTGKEMASTQEPDKLSMVMYLSKFYELFRGTPLRPMDSRRKNYGENADFGLGKTFFQNNYLNLTLPRKRTPRVDAQTEENDVNKRRRQGFNNLEELPAFSSRSLGSSQEYAKESGNQNKVKYMANQLLAKFEENTRNPSALKQDCPRVSGMGKPVLCSASRPPGTSHCPKLEESTPRLPPPLKRQFSSTVATGQVLRELNQVPASGECPGRPWRARAKSDLQLGGAENLATLPPTCQGALALSGVLRRLQQVEEKVLQKRAQNLANREFHTKNIKEKAAHLASMFGHGDLPQDKLLSKRVPHAHPPSPPSCLPSPDPAAAPSPPAADSVSPARKVLTVGKVSSGIGAAAEVLVNLYLNDHRPKTQATSPDLESLRKAEFPLSLGGRDTCYFCKKRVYVMERLSAEGHFFHRECFRCSVCAAILRVAAYAFDCDEGKFYCKLHFAHCKTSSKQRKRRAELNQQREEEGTWPEQEAARRDVPAESSCAVAAISTPEGSPPDEPISPKKSKSVPKPNSRPMEVEATSPRPSEWTSVRIGPGQDGQDVLAVRVLVTSEDSSSDTESDSGSIIGPCTEACEERPRLPESPPLSQPLTRHISLRETLTQPVSLLLHHKEPQAVPGLQRAYSLQSPSKYQNWRRKFQSNSTPMNQRALSPPKEPPPSSSSSSPSLPSSFSSASVPGHTTDDSSSPQVTYNLHSPQISRDDVSPTPIYLRRARAQGITKEIPLYLPHSPMLESTEHCLVSPDGEELRSPEEISASDGCQKALALGNSESTHKDSYPVSGKDPYLPNQMLALGAAGNTGDLSEESRMGQTGGAELSKERKLGLKKLVLTEEQKTMLLDWNDYTQEHKAGERLAQEKAENGRGNSLKPICSSTLSQAVKEKLLSQKKALGETRTPAAKAPREREVPPPKSPLRLIANAIFRSLLPSSEAGKKTSSKPETKTLPRGQPHAFTRSFSFRKLGSSKDGDQQSPGRHMAKKASAFFSLASPTSKAAQASDLSPPNPILRSRSLPNRPSKMFFATTSLPPSSKVEDVPTLLEKVSLQDAAQGPKKGASHISPLGLKDKSFESFLQECKERKDIGDFFNSPKEKGPPGNRVPSLEKLVQPVDSTSMGQVAHPSSTGQDAQAAVRTQAGKEGSSLVSSLVLVSGPGAPVTEDTSSPTSSSAEEDVETQLSSRLKEKIPRRRRKLEKQMAKQEELKRLHKAQAIQRQLEEVEERQRTSEIQGVRLEKVLRGETADSGTQDEAQLLQEWFKLVLEKNKLMRYESELLIMAQELELEDHQSRLEQKLRQKMLKDEGQKDENDLKEEQEIFEEMMQVIEQRNKLVDSLEEQRIKERTQDQHFENFVLSRGCQLSRT.

The interval 2 to 494 (GENEDEKQAQ…KHLYITKEMD (493 aa)) is monooxygenase domain. FAD is bound by residues Cys97, 116–118 (EKR), 123–125 (RNN), Phe183, Tyr298, and Asp398. The 104-residue stretch at 516 to 619 (DIRPNKLLTW…MVMYLSKFYE (104 aa)) folds into the Calponin-homology (CH) domain. Residue Ser631 is modified to Phosphoserine. The Nuclear localization signal signature appears at 660–681 (RKRTPRVDAQTEENDVNKRRRQ). Disordered regions lie at residues 664–709 (PRVD…ESGN), 753–776 (SRPP…PPLK), and 891–923 (KRVP…DSVS). Over residues 693 to 709 (SSRSLGSSQEYAKESGN) the composition is skewed to polar residues. Residues 896–917 (AHPPSPPSCLPSPDPAAAPSPP) show a composition bias toward pro residues. Residues 980 to 1042 (DTCYFCKKRV…KLHFAHCKTS (63 aa)) form the LIM zinc-binding domain. The Zn(2+) site is built by Cys982, Cys985, His1003, Cys1006, Cys1009, Cys1012, Cys1032, and His1035. 3 disordered regions span residues 1045–1134 (QRKR…GQDG), 1146–1185 (SEDS…QPLT), and 1233–1298 (QSNS…DDVS). Over residues 1050–1059 (AELNQQREEE) the composition is skewed to basic and acidic residues. Residues 1233–1243 (QSNSTPMNQRA) are compositionally biased toward polar residues. Low complexity predominate over residues 1254–1271 (SSSSSPSLPSSFSSASVP). Residues 1277–1292 (DSSSPQVTYNLHSPQI) are compositionally biased toward polar residues. An interaction with MAPK1 region spans residues 1300 to 1339 (TPIYLRRARAQGITKEIPLYLPHSPMLESTEHCLVSPDGE). Disordered regions lie at residues 1478–1505 (QKKA…KSPL), 1519–1622 (SSEA…SSKV), 1672–1726 (GDFF…QAGK), and 1739–1767 (SGPG…QLSS). Basic and acidic residues predominate over residues 1522-1534 (AGKKTSSKPETKT). Over residues 1570-1579 (KASAFFSLAS) the composition is skewed to low complexity. Over residues 1580 to 1591 (PTSKAAQASDLS) the composition is skewed to polar residues. Residues 1672–1682 (GDFFNSPKEKG) are compositionally biased toward basic and acidic residues. Ser1677 is subject to Phosphoserine. Composition is skewed to polar residues over residues 1698 to 1715 (VDST…TGQD) and 1747 to 1756 (EDTSSPTSSS). One can recognise a bMERB domain in the interval 1786–1936 (KQEELKRLHK…ERTQDQHFEN (151 aa)).

This sequence belongs to the Mical family. As to quaternary structure, interacts with PLXNA4. Interacts with RAB1B. Interacts with MAPK1/ERK2. Interacts with RAB35, RAB8A, RAB10, RAB13 and RAB15 (in their GTP-bound forms); binding to RAB35 is of low affinity compared to other Rab proteins; at least in case of RAB8A may bind 2 molecules of RAB8A simultaneously through a high and a low affinity binding site, respectively. May interact with MAPK1/ERK2. FAD is required as a cofactor.

The protein resides in the nucleus. It is found in the cytoplasm. It catalyses the reaction L-methionyl-[F-actin] + NADPH + O2 + H(+) = L-methionyl-(R)-S-oxide-[F-actin] + NADP(+) + H2O. In terms of biological role, methionine monooxygenase that promotes depolymerization of F-actin by mediating oxidation of residues 'Met-44' and 'Met-47' on actin to form methionine-sulfoxide, resulting in actin filament disassembly and preventing repolymerization. Regulates the disassembly of branched actin networks also by oxidizing ARP3B-containing ARP2/3 complexes leading to ARP3B dissociation from the network. Acts as a key regulator of the SRF signaling pathway elicited by nerve growth factor and serum: mediates oxidation and subsequent depolymerization of nuclear actin, leading to increase MKL1/MRTF-A presence in the nucleus and promote SRF:MKL1/MRTF-A-dependent gene transcription. Does not activate SRF:MKL1/MRTF-A through RhoA. This chain is [F-actin]-monooxygenase MICAL2, found in Rattus norvegicus (Rat).